Here is a 966-residue protein sequence, read N- to C-terminus: Aminopeptidase N (966 aa).

Over methionine 1–serine 8 the chain is Cytoplasmic. The helical; Signal-anchor for type II membrane protein transmembrane segment at lysine 9–valine 32 threads the bilayer. The interval tyrosine 33–asparagine 65 is cytosolic Ser/Thr-rich junction. At tyrosine 33–alanine 966 the chain is on the extracellular side. Asparagine 40 and asparagine 125 each carry an N-linked (GlcNAc...) asparagine glycan. Residues asparagine 40–threonine 61 form a disordered region. The tract at residues leucine 66–alanine 966 is metalloprotease. At tyrosine 173 the chain carries Sulfotyrosine. N-linked (GlcNAc...) asparagine glycosylation is found at asparagine 259 and asparagine 315. A substrate-binding site is contributed by glycine 348–asparagine 352. Histidine 384 serves as a coordination point for Zn(2+). Glutamate 385 functions as the Proton acceptor in the catalytic mechanism. Zn(2+) contacts are provided by histidine 388 and glutamate 407. Residues tyrosine 415 and tyrosine 420 each carry the sulfotyrosine modification. Asparagine 552, asparagine 570, asparagine 624, and asparagine 734 each carry an N-linked (GlcNAc...) asparagine glycan. Cystine bridges form between cysteine 760–cysteine 767 and cysteine 797–cysteine 833. Asparagine 817 carries an N-linked (GlcNAc...) asparagine glycan. Tyrosine 852 carries the phosphotyrosine modification. Tyrosine 912 carries the sulfotyrosine modification.

This sequence belongs to the peptidase M1 family. In terms of assembly, homodimer. Interacts with SLC6A19. Zn(2+) serves as cofactor. Post-translationally, sulfated. In terms of processing, N- and O-glycosylated. May undergo proteolysis and give rise to a soluble form.

It is found in the cell membrane. It catalyses the reaction Release of an N-terminal amino acid, Xaa-|-Yaa- from a peptide, amide or arylamide. Xaa is preferably Ala, but may be most amino acids including Pro (slow action). When a terminal hydrophobic residue is followed by a prolyl residue, the two may be released as an intact Xaa-Pro dipeptide.. Broad specificity aminopeptidase which plays a role in the final digestion of peptides generated from hydrolysis of proteins by gastric and pancreatic proteases. Also involved in the processing of various peptides including peptide hormones, such as angiotensin III and IV, neuropeptides, and chemokines. May also be involved the cleavage of peptides bound to major histocompatibility complex class II molecules of antigen presenting cells. May have a role in angiogenesis and promote cholesterol crystallization. May have a role in amino acid transport by acting as binding partner of amino acid transporter SLC6A19 and regulating its activity. The sequence is that of Aminopeptidase N (ANPEP) from Oryctolagus cuniculus (Rabbit).